The primary structure comprises 403 residues: Arginine biosynthesis bifunctional protein ArgJ (403 aa).

Residues threonine 151, lysine 177, threonine 188, glutamate 275, asparagine 398, and serine 403 each contribute to the substrate site. Threonine 188 acts as the Nucleophile in catalysis.

It belongs to the ArgJ family. In terms of assembly, heterotetramer of two alpha and two beta chains.

It localises to the cytoplasm. The catalysed reaction is N(2)-acetyl-L-ornithine + L-glutamate = N-acetyl-L-glutamate + L-ornithine. It catalyses the reaction L-glutamate + acetyl-CoA = N-acetyl-L-glutamate + CoA + H(+). The protein operates within amino-acid biosynthesis; L-arginine biosynthesis; L-ornithine and N-acetyl-L-glutamate from L-glutamate and N(2)-acetyl-L-ornithine (cyclic): step 1/1. It functions in the pathway amino-acid biosynthesis; L-arginine biosynthesis; N(2)-acetyl-L-ornithine from L-glutamate: step 1/4. Its function is as follows. Catalyzes two activities which are involved in the cyclic version of arginine biosynthesis: the synthesis of N-acetylglutamate from glutamate and acetyl-CoA as the acetyl donor, and of ornithine by transacetylation between N(2)-acetylornithine and glutamate. The chain is Arginine biosynthesis bifunctional protein ArgJ from Caulobacter vibrioides (strain ATCC 19089 / CIP 103742 / CB 15) (Caulobacter crescentus).